The chain runs to 571 residues: Peptide-N4-(N-acetyl-beta-glucosaminyl)asparagine amidase A (571 aa).

12 N-linked (GlcNAc...) asparagine glycosylation sites follow: Asn-121, Asn-143, Asn-197, Asn-241, Asn-318, Asn-367, Asn-390, Asn-423, Asn-457, Asn-481, Asn-524, and Asn-529.

In terms of assembly, heterodimer of a large and a small chain. Post-translationally, is highly glycosylated and is largly resistant against self-deglycosylation.

It carries out the reaction Hydrolysis of an N(4)-(acetyl-beta-D-glucosaminyl)asparagine residue in which the glucosamine residue may be further glycosylated, to yield a (substituted) N-acetyl-beta-D-glucosaminylamine and a peptide containing an aspartate residue.. In Prunus dulcis (Almond), this protein is Peptide-N4-(N-acetyl-beta-glucosaminyl)asparagine amidase A.